Consider the following 291-residue polypeptide: ATP synthase gamma chain (291 aa).

Belongs to the ATPase gamma chain family. In terms of assembly, F-type ATPases have 2 components, CF(1) - the catalytic core - and CF(0) - the membrane proton channel. CF(1) has five subunits: alpha(3), beta(3), gamma(1), delta(1), epsilon(1). CF(0) has three main subunits: a, b and c.

The protein localises to the cell inner membrane. In terms of biological role, produces ATP from ADP in the presence of a proton gradient across the membrane. The gamma chain is believed to be important in regulating ATPase activity and the flow of protons through the CF(0) complex. This chain is ATP synthase gamma chain, found in Methylobacillus flagellatus (strain ATCC 51484 / DSM 6875 / VKM B-1610 / KT).